Reading from the N-terminus, the 477-residue chain is C3a anaphylatoxin chemotactic receptor (477 aa).

Residues 1–23 (MESFDADTNSTDLHSRPLFQPQD) are Extracellular-facing. N-linked (GlcNAc...) asparagine glycosylation occurs at N9. The helical transmembrane segment at 24–46 (IASMVILGLTCLLGLLGNGLVLW) threads the bilayer. Over 47 to 57 (VAGVKMKTTVN) the chain is Cytoplasmic. The helical transmembrane segment at 58–80 (TVWFLHLTLADFLCCLSLPFSLA) threads the bilayer. Residues 81–96 (HLILQGHWPYGLFLCK) are Extracellular-facing. A disulfide bridge links C95 with C172. The chain crosses the membrane as a helical span at residues 97–118 (LIPSIIILNMFASVFLLTAISL). At 119 to 139 (DRCLIVHKPIWCQNHRNVRTA) the chain is on the cytoplasmic side. The helical transmembrane segment at 140 to 160 (FAICGCVWVVAFVMCVPVFVY) threads the bilayer. Residues 161–333 (RDLFIMDNRS…TPLMAITITR (173 aa)) lie on the Extracellular side of the membrane. N168 carries N-linked (GlcNAc...) asparagine glycosylation. Residues Y174 and Y184 each carry the sulfotyrosine modification. N-linked (GlcNAc...) asparagine glycosylation is found at N197 and N201. At Y312 the chain carries Sulfotyrosine. A helical transmembrane segment spans residues 334 to 353 (LVVGFLVPFFIMVICYSLIV). The Cytoplasmic portion of the chain corresponds to 354 to 370 (FRMRKTNFTKSRNKTFR). Residues 371–393 (VAVAVVTVFFICWTPYHLVGVLL) traverse the membrane as a helical segment. Residues 394 to 410 (LITDPESSLGEAVMSWD) lie on the Extracellular side of the membrane. A helical membrane pass occupies residues 411 to 431 (HMSIALASANSCFNPFLYALL). Over 432–477 (GKDFRKKARQSIKGILEAAFSEELTHSTNCTQDKASSKRNNMSTDV) the chain is Cytoplasmic. Residue S452 is modified to Phosphoserine. T456 bears the Phosphothreonine mark.

The protein belongs to the G-protein coupled receptor 1 family. In terms of assembly, interacts with VGF-derived peptide TLQP-21. In terms of tissue distribution, detected in varying levels in all tissues examined except the spleen. Especially abundant in heart and lung.

The protein resides in the cell membrane. Receptor for the chemotactic and inflammatory peptide anaphylatoxin C3a. This receptor stimulates chemotaxis, granule enzyme release and superoxide anion production. The polypeptide is C3a anaphylatoxin chemotactic receptor (C3ar1) (Mus musculus (Mouse)).